Reading from the N-terminus, the 326-residue chain is DNA-directed RNA polymerase subunit alpha (326 aa).

Residues 1–231 are alpha N-terminal domain (alpha-NTD); sequence MQTNLLKPKI…DQLVVFAALE (231 aa). The alpha C-terminal domain (alpha-CTD) stretch occupies residues 247–326; the sequence is VDPMLMRPVD…ESWPPANLEK (80 aa).

This sequence belongs to the RNA polymerase alpha chain family. Homodimer. The RNAP catalytic core consists of 2 alpha, 1 beta, 1 beta' and 1 omega subunit. When a sigma factor is associated with the core the holoenzyme is formed, which can initiate transcription.

The enzyme catalyses RNA(n) + a ribonucleoside 5'-triphosphate = RNA(n+1) + diphosphate. DNA-dependent RNA polymerase catalyzes the transcription of DNA into RNA using the four ribonucleoside triphosphates as substrates. In Polynucleobacter asymbioticus (strain DSM 18221 / CIP 109841 / QLW-P1DMWA-1) (Polynucleobacter necessarius subsp. asymbioticus), this protein is DNA-directed RNA polymerase subunit alpha.